The sequence spans 169 residues: Ribosomal RNA large subunit methyltransferase H (169 aa).

S-adenosyl-L-methionine contacts are provided by residues Leu85, Gly117, and 136-141; that span reads LGELTW.

Belongs to the RNA methyltransferase RlmH family. Homodimer.

It localises to the cytoplasm. It catalyses the reaction pseudouridine(1915) in 23S rRNA + S-adenosyl-L-methionine = N(3)-methylpseudouridine(1915) in 23S rRNA + S-adenosyl-L-homocysteine + H(+). Its function is as follows. Specifically methylates the pseudouridine at position 1915 (m3Psi1915) in 23S rRNA. This is Ribosomal RNA large subunit methyltransferase H from Brucella abortus biovar 1 (strain 9-941).